The chain runs to 421 residues: Histone-lysine N-methyltransferase SUV39H1 (421 aa).

A Chromo domain is found at 46–104; the sequence is FEVEYLWNYKKVQDQELYLVKWKYYPDSESTWEPRHHLKCNNLLKQFHLDLERELLRRA. Residues 189-249 form the Pre-SET domain; the sequence is AGCKCRDCFS…SCPNRVVQKG (61 aa). Zn(2+) is bound by residues C191, C193, C196, C203, C204, C231, C235, C237, and C241. Residues 252-375 form the SET domain; that stretch reads YKFCIFRTSD…TGEELTFDYN (124 aa). S-adenosyl-L-methionine-binding positions include 263–265, Y306, and 332–333; these read RGW and NH. Residues C335, C409, C411, and C416 each coordinate Zn(2+). The Post-SET domain occupies 405–421; that stretch reads VRVECKCGVSSCRKYLF.

It belongs to the class V-like SAM-binding methyltransferase superfamily. Histone-lysine methyltransferase family. Suvar3-9 subfamily.

The protein resides in the nucleus. Its subcellular location is the chromosome. It localises to the centromere. It carries out the reaction L-lysyl(9)-[histone H3] + 3 S-adenosyl-L-methionine = N(6),N(6),N(6)-trimethyl-L-lysyl(9)-[histone H3] + 3 S-adenosyl-L-homocysteine + 3 H(+). Functionally, histone methyltransferase that specifically trimethylates 'Lys-9' of histone H3 using monomethylated H3 'Lys-9' as substrate. H3 'Lys-9' trimethylation represents a specific tag for epigenetic transcriptional repression by recruiting HP1 (CBX1, CBX3 and/or CBX5) proteins to methylated histones. Mainly functions in heterochromatin regions, thereby playing a central role in the establishment of constitutive heterochromatin at pericentric and telomere regions. H3 'Lys-9' trimethylation is also required to direct DNA methylation at pericentric repeats. SUV39H1 is targeted to histone H3 via its interaction with RB1 and is involved in many processes. The polypeptide is Histone-lysine N-methyltransferase SUV39H1 (suv39h1) (Xenopus laevis (African clawed frog)).